The chain runs to 323 residues: o-succinylbenzoate synthase (323 aa).

The active-site Proton donor is the lysine 134. 3 residues coordinate Mg(2+): aspartate 162, glutamate 191, and aspartate 214. The Proton acceptor role is filled by lysine 236.

It belongs to the mandelate racemase/muconate lactonizing enzyme family. MenC type 1 subfamily. It depends on a divalent metal cation as a cofactor.

The enzyme catalyses (1R,6R)-6-hydroxy-2-succinyl-cyclohexa-2,4-diene-1-carboxylate = 2-succinylbenzoate + H2O. It participates in quinol/quinone metabolism; 1,4-dihydroxy-2-naphthoate biosynthesis; 1,4-dihydroxy-2-naphthoate from chorismate: step 4/7. It functions in the pathway quinol/quinone metabolism; menaquinone biosynthesis. Converts 2-succinyl-6-hydroxy-2,4-cyclohexadiene-1-carboxylate (SHCHC) to 2-succinylbenzoate (OSB). The polypeptide is o-succinylbenzoate synthase (Yersinia enterocolitica serotype O:8 / biotype 1B (strain NCTC 13174 / 8081)).